The primary structure comprises 495 residues: Hydroxyneurosporene desaturase (495 aa).

Belongs to the carotenoid/retinoid oxidoreductase family.

The enzyme catalyses rhodopin + A = (3E)-3,4-didehydrorhodopin + AH2. It participates in carotenoid biosynthesis; spheroidene biosynthesis. Catalyzes the introduction of C-3,4 double bonds into 1-hydroxyneurosporene (1-HO-Neu) to yield demethylspheroidene (DMS). It prefer the acyclic carotenoids such as 1-hydroxylycopene, and 1-hydroxy-gamma-carotene, whereas 1-hydroxy-3,4-didehydrolycopene and 1,1-dihydroxylycopene are much less effective. This chain is Hydroxyneurosporene desaturase (crtD), found in Cereibacter sphaeroides (strain ATCC 17023 / DSM 158 / JCM 6121 / CCUG 31486 / LMG 2827 / NBRC 12203 / NCIMB 8253 / ATH 2.4.1.) (Rhodobacter sphaeroides).